Reading from the N-terminus, the 254-residue chain is 3-deoxy-manno-octulosonate cytidylyltransferase (254 aa).

It belongs to the KdsB family.

It is found in the cytoplasm. The catalysed reaction is 3-deoxy-alpha-D-manno-oct-2-ulosonate + CTP = CMP-3-deoxy-beta-D-manno-octulosonate + diphosphate. Its pathway is nucleotide-sugar biosynthesis; CMP-3-deoxy-D-manno-octulosonate biosynthesis; CMP-3-deoxy-D-manno-octulosonate from 3-deoxy-D-manno-octulosonate and CTP: step 1/1. It participates in bacterial outer membrane biogenesis; lipopolysaccharide biosynthesis. Its function is as follows. Activates KDO (a required 8-carbon sugar) for incorporation into bacterial lipopolysaccharide in Gram-negative bacteria. The sequence is that of 3-deoxy-manno-octulosonate cytidylyltransferase from Haemophilus influenzae (strain 86-028NP).